Here is a 605-residue protein sequence, read N- to C-terminus: Acetoin dehydrogenase operon transcriptional activator AcoR (605 aa).

Residues Val-295–Ile-520 form the Sigma-54 factor interaction domain. Residues Gly-323–Glu-330 and Ala-387–Glu-396 contribute to the ATP site. Residues Val-578–Lys-597 constitute a DNA-binding region (H-T-H motif).

In terms of biological role, acts as a transcriptional activator of the acoABCL operon encoding the acetoin dehydrogenase complex. This chain is Acetoin dehydrogenase operon transcriptional activator AcoR (acoR), found in Bacillus subtilis (strain 168).